Here is a 439-residue protein sequence, read N- to C-terminus: Phthalate 4,5-dioxygenase oxygenase subunit (439 aa).

The region spanning 27-134 is the Rieske domain; sequence WTPVCLLEEV…TREWGGFVWA (108 aa). [2Fe-2S] cluster is bound by residues Cys70, His72, Cys89, and His92. Positions 181 and 186 each coordinate Fe cation.

This sequence belongs to the bacterial ring-hydroxylating dioxygenase alpha subunit family. As to quaternary structure, this dioxygenase system consists of two proteins: phthalate oxygenase and phthalate oxygenase reductase. The cofactor is [2Fe-2S] cluster. Requires Fe cation as cofactor.

The enzyme catalyses phthalate + NADH + O2 + H(+) = cis-4,5-dihydroxycyclohexa-2,6-diene-1,2-dicarboxylate + NAD(+). Its pathway is xenobiotic degradation; phthalate degradation; 3,4-dihydroxybenzoate from phthalate: step 1/3. The chain is Phthalate 4,5-dioxygenase oxygenase subunit (pht3) from Pseudomonas putida (Arthrobacter siderocapsulatus).